The sequence spans 362 residues: Dihydroorotate dehydrogenase (quinone) (362 aa).

FMN contacts are provided by residues 62–66 and Thr-86; that span reads AGYDK. Lys-66 provides a ligand contact to substrate. Substrate is bound at residue 111 to 115; it reads NRLGF. FMN contacts are provided by Asn-139 and Asn-170. Asn-170 lines the substrate pocket. The active-site Nucleophile is the Ser-173. Position 175 (Asn-175) interacts with substrate. Lys-215 and Ser-243 together coordinate FMN. Position 244–245 (244–245) interacts with substrate; the sequence is NT. Residues Gly-266, Gly-295, and 316–317 contribute to the FMN site; that span reads YS.

The protein belongs to the dihydroorotate dehydrogenase family. Type 2 subfamily. As to quaternary structure, monomer. The cofactor is FMN.

It localises to the cell membrane. It carries out the reaction (S)-dihydroorotate + a quinone = orotate + a quinol. It participates in pyrimidine metabolism; UMP biosynthesis via de novo pathway; orotate from (S)-dihydroorotate (quinone route): step 1/1. Functionally, catalyzes the conversion of dihydroorotate to orotate with quinone as electron acceptor. This is Dihydroorotate dehydrogenase (quinone) from Sinorhizobium fredii (strain NBRC 101917 / NGR234).